The chain runs to 692 residues: MVPGAWHSLLFTTSSASEKEENRSQRMQLGEQLLNSSTPNLPHTFYPLTGDPSSAVHSPSLEFSVGHKGQQHKKYSSGSSRGLQLDSPREAGSSSTMLSETGEGFSVAKTLPDNVRKGSPSAEEELNTAVPTSAPRYLDGSLQAASERYYLQPQGQQLQQTTTELGSPCSIFPYAPPQHSAVYPAGGAARYPPYGSMLPPAGFSPPVCPSRPQYSSGYQYSQAPGTMYSPYPPAGTGSGLSALGLPGGGAGVRAQVFLCNRPLWLKFHRHQTEMIITKQGRRMFPFLSFNITGLNPTAHYNVFVEVVLADPNHWRFQGGKWVTCGKADNNMQGNKVYVHPESPNTGAHWMRQEISFGKLKLTNNKGANNNSTQMIVLQSLHKYQPRLHIVEVSEDGVEDLNDSAKNQTFTFPENQFIAVTAYQNTDITQLKIDHNPFAKGFRDNYDSMYTASESDRLTPSPADSPRSHQIVPGTRYSVQPFFQDQFVNNLPPARYYSGERTVPQANGLLSPQTNEEVANVPPQRWFVTPVQQAAANKLDMGAYETDYSSGSLLTYGIKSLPIQTSHPMAYYPDAAFASMAGWGSRGSTYQRKMTTSLPWSSRSSPSGFSEDLLPKDKVKEEMSSSWVETPPSIKSLDSNDSGVYTGACKRRRLSPSTSSNENSPPIKCEDIGTEDYKDATKGLGYYSFYSSS.

The interval 35–135 (NSSTPNLPHT…LNTAVPTSAP (101 aa)) is disordered. The segment at residues 263–443 (LWLKFHRHQT…HNPFAKGFRD (181 aa)) is a DNA-binding region (T-box). Residues 578–692 (SMAGWGSRGS…LGYYSFYSSS (115 aa)) are required for transcription activation. 2 disordered regions span residues 595–614 (TSLP…DLLP) and 621–673 (EMSS…DIGT). Composition is skewed to low complexity over residues 596–609 (SLPW…SGFS) and 654–665 (SPSTSSNENSPP).

The protein localises to the nucleus. In terms of biological role, functions as a transcriptional activator playing a crucial role during development. Functions in gastrulation, regulating mesoderm differentiation. Activates wnt8, t/bra, chrd and mix-A/mix.1 expression. The polypeptide is Eomesodermin (eomes) (Xenopus laevis (African clawed frog)).